We begin with the raw amino-acid sequence, 633 residues long: 1-deoxy-D-xylulose-5-phosphate synthase (633 aa).

Thiamine diphosphate is bound by residues histidine 72 and 113-115 (GHS). Aspartate 144 contributes to the Mg(2+) binding site. Thiamine diphosphate contacts are provided by residues 145–146 (GA), asparagine 173, tyrosine 284, and glutamate 367. Mg(2+) is bound at residue asparagine 173.

This sequence belongs to the transketolase family. DXPS subfamily. As to quaternary structure, homodimer. The cofactor is Mg(2+). Thiamine diphosphate serves as cofactor.

It catalyses the reaction D-glyceraldehyde 3-phosphate + pyruvate + H(+) = 1-deoxy-D-xylulose 5-phosphate + CO2. It participates in metabolic intermediate biosynthesis; 1-deoxy-D-xylulose 5-phosphate biosynthesis; 1-deoxy-D-xylulose 5-phosphate from D-glyceraldehyde 3-phosphate and pyruvate: step 1/1. Catalyzes the acyloin condensation reaction between C atoms 2 and 3 of pyruvate and glyceraldehyde 3-phosphate to yield 1-deoxy-D-xylulose-5-phosphate (DXP). This is 1-deoxy-D-xylulose-5-phosphate synthase from Bacillus licheniformis (strain ATCC 14580 / DSM 13 / JCM 2505 / CCUG 7422 / NBRC 12200 / NCIMB 9375 / NCTC 10341 / NRRL NRS-1264 / Gibson 46).